Consider the following 755-residue polypeptide: Tryptophan 2-monooxygenase (755 aa).

FMN is bound by residues serine 247, glutamate 267, lysine 275, and arginine 295. Arginine 295 is a binding site for substrate.

This sequence belongs to the tryptophan 2-monooxygenase family. The cofactor is FMN.

It carries out the reaction L-tryptophan + O2 = indole-3-acetamide + CO2 + H2O. The protein operates within plant hormone metabolism; auxin biosynthesis. This is Tryptophan 2-monooxygenase (tms1) from Agrobacterium tumefaciens (strain Ach5).